The sequence spans 79 residues: Cytochrome b (79 aa).

3 consecutive transmembrane segments (helical) span residues 1–7 (SALFLAM), 31–52 (WLIR…YLHI), and 67–79 (WNIG…LTMA). Residues histidine 37 and histidine 51 each coordinate heme b.

The protein belongs to the cytochrome b family. The cytochrome bc1 complex contains 11 subunits: 3 respiratory subunits (MT-CYB, CYC1 and UQCRFS1), 2 core proteins (UQCRC1 and UQCRC2) and 6 low-molecular weight proteins (UQCRH/QCR6, UQCRB/QCR7, UQCRQ/QCR8, UQCR10/QCR9, UQCR11/QCR10 and a cleavage product of UQCRFS1). This cytochrome bc1 complex then forms a dimer. Requires heme b as cofactor.

It is found in the mitochondrion inner membrane. Its function is as follows. Component of the ubiquinol-cytochrome c reductase complex (complex III or cytochrome b-c1 complex) that is part of the mitochondrial respiratory chain. The b-c1 complex mediates electron transfer from ubiquinol to cytochrome c. Contributes to the generation of a proton gradient across the mitochondrial membrane that is then used for ATP synthesis. In Dipodomys panamintinus (Panamint kangaroo rat), this protein is Cytochrome b (MT-CYB).